A 367-amino-acid chain; its full sequence is Putative F-box protein At3g21130 (367 aa).

The 47-residue stretch at Lys4–His50 folds into the F-box domain.

The sequence is that of Putative F-box protein At3g21130 from Arabidopsis thaliana (Mouse-ear cress).